The chain runs to 460 residues: Serine protease HTRA1 (460 aa).

The N-terminal stretch at 1–18 is a signal peptide; the sequence is MAMLWLAVLLTCGAPAAL. The region spanning 22-92 is the IGFBP N-terminal domain; that stretch reads SGVGCPSRCD…NGGVARCQCP (71 aa). 8 disulfides stabilise this stretch: Cys26-Cys51, Cys30-Cys53, Cys35-Cys54, Cys42-Cys57, Cys65-Cys80, Cys74-Cys89, Cys91-Cys109, and Cys98-Cys134. The Kazal-like domain occupies 74–136; it reads CASGLRCVKN…IPIQRGDCQQ (63 aa). The tract at residues 183–343 is serine protease; sequence GSGFIVSEDG…IPSDKIRKFL (161 aa). Active-site charge relay system residues include His199, Asp229, and Ser307. The PDZ domain occupies 344–447; sequence AESHNRQSTG…LHLVIRRGNE (104 aa).

It belongs to the peptidase S1C family. In terms of assembly, forms homotrimers. In the presence of substrate, may form higher-order multimers in a PDZ-independent manner.

Its subcellular location is the cell membrane. The protein localises to the secreted. It localises to the cytoplasm. The protein resides in the cytosol. Its function is as follows. Serine protease with a variety of targets, including extracellular matrix proteins and proteoglycans such as biglycan, syndecan-4 and glypican-4. Through cleavage of proteoglycans, may release soluble FGF-glycosaminoglycan complexes that promote the range and intensity of FGF signals in the extracellular space. Consequently, facilitates inductive processes in the developing embryo, such as posteriorization, mesoderm induction and neuronal differentiation. Regulates the availability of insulin-like growth factors (IGFs) by cleaving IGF-binding proteins. Inhibits signaling mediated by TGF-beta family members. Consequently, may regulate many physiological processes. Intracellularly, degrades TSC2, leading to the activation of TSC2 downstream targets. In Xenopus tropicalis (Western clawed frog), this protein is Serine protease HTRA1 (htra1).